A 625-amino-acid chain; its full sequence is MMLWKFPVRYDVIVIGGGHAGCEAALASARMGLRTLLLTMNLDTIAKMSCNPAVGGIAKGHIVREIDALGGEMGKVIDVTGIQYRMLNATKGPAVWAPRAQADKLAYQSEMKHRMERVSNLDIKQGTIEDLLIENDHICGVITKEGISYDCQAIVLSSGTFLRGLLHIGETNYSGGRAGDQPSVGMSASLEKYGLKLGRLKTGTPPRINKRSIDFSCTEEQPGDPGVKFSYDNEGIPRLPQVSCYITYTTEETKQIILSNIHRSPMYSGKIKGVGPRYCPSIEDKVVRFSDKERHQIFLEPEGLQTQEVYVNGVSSSLPFDVQLAFIKSIPALRHAEIMRPAYAIEYDYVISGQIDFSLECKKIGGLFLAGQINGTSGYEEAAGQGLMAGINAANKVMGKAPLILKRSEAYIGVMIDDLVTKGLDEPYRMFTSRAEHRLLLRQDNADLRLRRYGYEVGLVDQTRYDRVKEKQRIMEEESERLAKTFKQVSNKGYTLTQLLCRPENTYASLLKEYPDVMQNFGEEINFQIELNLKYAGYIDRQTSEVAKLAHVEKIQIPIGFDFSTVNGLRNEAKQKLNQIAPRHLGQALRISGVSPADISILMIALTRYQEPIEKERLTSDCSEA.

Residues glycine 16 to glycine 21, isoleucine 128, and serine 183 each bind FAD. An NAD(+)-binding site is contributed by glycine 275–phenylalanine 289. Glutamine 372 serves as a coordination point for FAD.

It belongs to the MnmG family. Homodimer. Heterotetramer of two MnmE and two MnmG subunits. The cofactor is FAD.

Its subcellular location is the cytoplasm. NAD-binding protein involved in the addition of a carboxymethylaminomethyl (cmnm) group at the wobble position (U34) of certain tRNAs, forming tRNA-cmnm(5)s(2)U34. This chain is tRNA uridine 5-carboxymethylaminomethyl modification enzyme MnmG, found in Protochlamydia amoebophila (strain UWE25).